We begin with the raw amino-acid sequence, 555 residues long: E3 ubiquitin-protein ligase NEURL1B (555 aa).

The NHR 1 domain occupies 38 to 194; it reads APRFHAQAKG…ITDEVQLLES (157 aa). Position 199 is a phosphothreonine (Thr199). The NHR 2 domain maps to 279–433; that stretch reads DLRFHATRGP…GVAGQLRLLG (155 aa). Residues 436–493 form a disordered region; it reads QSSPATTTPSGSLSGSQDDSDSDMTFSVNQSSSASESSLVTAPSSPLSPPVSPVFSPP. The span at 462-480 shows a compositional bias: low complexity; sequence SVNQSSSASESSLVTAPSS. A compositionally biased stretch (pro residues) spans 481–493; the sequence is PLSPPVSPVFSPP. The RING-type zinc-finger motif lies at 503–543; that stretch reads CTVCFDGEVDTVIYTCGHMCLCHSCGLRLKRQARACCPICR.

Interacts with JAG1, DLL1 and DLL4. As to expression, highest expression in brain, prostate and small intestine. In the brain the levels are higher in fetal than in adult stage. In the adult brain the highest levels are detected in the olfactory system, cerebellar cortex, optic nerve and the frontal lobe.

It is found in the cytoplasm. The catalysed reaction is S-ubiquitinyl-[E2 ubiquitin-conjugating enzyme]-L-cysteine + [acceptor protein]-L-lysine = [E2 ubiquitin-conjugating enzyme]-L-cysteine + N(6)-ubiquitinyl-[acceptor protein]-L-lysine.. The protein operates within protein modification; protein ubiquitination. Its function is as follows. E3 ubiquitin-protein ligase involved in regulation of the Notch pathway through influencing the stability and activity of several Notch ligands. This chain is E3 ubiquitin-protein ligase NEURL1B (NEURL1B), found in Homo sapiens (Human).